Here is a 66-residue protein sequence, read N- to C-terminus: Toxin Boma6c (66 aa).

The region spanning 2–64 (RDAYIAQNYN…VPIRIPGKCH (63 aa)) is the LCN-type CS-alpha/beta domain. 4 disulfides stabilise this stretch: Cys12-Cys63, Cys16-Cys36, Cys22-Cys46, and Cys26-Cys48.

This sequence belongs to the long (4 C-C) scorpion toxin superfamily. Sodium channel inhibitor family. Alpha subfamily. Expressed by the venom gland.

It localises to the secreted. Alpha toxins bind voltage-independently at site-3 of sodium channels (Nav) and inhibit the inactivation of the activated channels, thereby blocking neuronal transmission. The protein is Toxin Boma6c of Buthus occitanus mardochei (Moroccan scorpion).